We begin with the raw amino-acid sequence, 102 residues long: Guanyl-specific ribonuclease Pc (102 aa).

Disulfide bonds link Cys-2-Cys-10 and Cys-6-Cys-101. Residue His-38 is part of the active site. Glu-56 acts as the Proton acceptor in catalysis. The active-site Proton donor is His-90.

This sequence belongs to the ribonuclease N1/T1 family.

It catalyses the reaction [RNA] containing guanosine + H2O = an [RNA fragment]-3'-guanosine-3'-phosphate + a 5'-hydroxy-ribonucleotide-3'-[RNA fragment].. The polypeptide is Guanyl-specific ribonuclease Pc (Penicillium chrysogenum (Penicillium notatum)).